The primary structure comprises 804 residues: RasGAP-activating-like protein 1 (804 aa).

C2 domains follow at residues 1 to 105 (MAKS…DSWI) and 116 to 231 (VQGE…KGWF). 10 residues coordinate Ca(2+): D21, D27, D74, D76, D82, D149, D155, D202, D204, and D210. One can recognise a Ras-GAP domain in the interval 317 to 545 (GLAGRFLDYL…SRVRDFLDRL (229 aa)). Residues 565–672 (AIVREGYLLK…WLSALRKASA (108 aa)) form the PH domain. The Btk-type zinc-finger motif lies at 674 to 710 (NPNKLAACHPGAFRSARWTCCLQAERSAAGCSRTHSA). The Zn(2+) site is built by H682, C693, C694, and C704.

Ca(2+) serves as cofactor. As to expression, highly expressed in thyroid and adrenal medulla, lower expression in brain, spinal cord and trachea. Expressed in melanocytes.

Functionally, probable inhibitory regulator of the Ras-cyclic AMP pathway. Plays a role in dendrite formation by melanocytes. In Homo sapiens (Human), this protein is RasGAP-activating-like protein 1.